The sequence spans 722 residues: Putative tyrosine-protein kinase in cps region (722 aa).

2 helical membrane passes run 31 to 53 (IIIALTSFATLIALLYAFFATPI) and 427 to 449 (IVVLAGLFIGLVISVSLVLVRIL).

It belongs to the etk/wzc family. Autophosphorylated on tyrosine residue(s).

It localises to the cell inner membrane. The catalysed reaction is L-tyrosyl-[protein] + ATP = O-phospho-L-tyrosyl-[protein] + ADP + H(+). The protein operates within glycan metabolism; exopolysaccharide biosynthesis. The sequence is that of Putative tyrosine-protein kinase in cps region from Klebsiella pneumoniae.